The following is a 257-amino-acid chain: Type III pantothenate kinase (257 aa).

6 to 13 (DCGNTNTV) serves as a coordination point for ATP. 107–110 (GPDR) contributes to the substrate binding site. Asp109 functions as the Proton acceptor in the catalytic mechanism. Asp129 contacts K(+). Thr132 lines the ATP pocket. Thr184 lines the substrate pocket.

The protein belongs to the type III pantothenate kinase family. As to quaternary structure, homodimer. It depends on NH4(+) as a cofactor. K(+) serves as cofactor.

It localises to the cytoplasm. It carries out the reaction (R)-pantothenate + ATP = (R)-4'-phosphopantothenate + ADP + H(+). It functions in the pathway cofactor biosynthesis; coenzyme A biosynthesis; CoA from (R)-pantothenate: step 1/5. In terms of biological role, catalyzes the phosphorylation of pantothenate (Pan), the first step in CoA biosynthesis. In Roseobacter denitrificans (strain ATCC 33942 / OCh 114) (Erythrobacter sp. (strain OCh 114)), this protein is Type III pantothenate kinase.